A 194-amino-acid chain; its full sequence is dITP/XTP pyrophosphatase (194 aa).

8–13 (TSNPGK) provides a ligand contact to substrate. Mg(2+) is bound by residues Glu-38 and Asp-67. The Proton acceptor role is filled by Asp-67. Substrate-binding positions include Ser-68, 152–155 (FGYD), Lys-175, and 180–181 (HR).

It belongs to the HAM1 NTPase family. In terms of assembly, homodimer. The cofactor is Mg(2+).

The catalysed reaction is XTP + H2O = XMP + diphosphate + H(+). It carries out the reaction dITP + H2O = dIMP + diphosphate + H(+). It catalyses the reaction ITP + H2O = IMP + diphosphate + H(+). In terms of biological role, pyrophosphatase that catalyzes the hydrolysis of nucleoside triphosphates to their monophosphate derivatives, with a high preference for the non-canonical purine nucleotides XTP (xanthosine triphosphate), dITP (deoxyinosine triphosphate) and ITP. Seems to function as a house-cleaning enzyme that removes non-canonical purine nucleotides from the nucleotide pool, thus preventing their incorporation into DNA/RNA and avoiding chromosomal lesions. The protein is dITP/XTP pyrophosphatase of Legionella pneumophila (strain Paris).